Reading from the N-terminus, the 195-residue chain is Molybdenum cofactor guanylyltransferase (195 aa).

GTP-binding positions include 10-12 (LAG), K23, N51, D69, and D99. D99 contacts Mg(2+).

It belongs to the MobA family. As to quaternary structure, monomer. It depends on Mg(2+) as a cofactor.

It localises to the cytoplasm. It carries out the reaction Mo-molybdopterin + GTP + H(+) = Mo-molybdopterin guanine dinucleotide + diphosphate. Functionally, transfers a GMP moiety from GTP to Mo-molybdopterin (Mo-MPT) cofactor (Moco or molybdenum cofactor) to form Mo-molybdopterin guanine dinucleotide (Mo-MGD) cofactor. The chain is Molybdenum cofactor guanylyltransferase from Yersinia pseudotuberculosis serotype O:1b (strain IP 31758).